The following is a 322-amino-acid chain: Methionyl-tRNA formyltransferase (322 aa).

112-115 (SLLP) provides a ligand contact to (6S)-5,6,7,8-tetrahydrofolate.

The protein belongs to the Fmt family.

The catalysed reaction is L-methionyl-tRNA(fMet) + (6R)-10-formyltetrahydrofolate = N-formyl-L-methionyl-tRNA(fMet) + (6S)-5,6,7,8-tetrahydrofolate + H(+). Attaches a formyl group to the free amino group of methionyl-tRNA(fMet). The formyl group appears to play a dual role in the initiator identity of N-formylmethionyl-tRNA by promoting its recognition by IF2 and preventing the misappropriation of this tRNA by the elongation apparatus. This chain is Methionyl-tRNA formyltransferase, found in Synechococcus sp. (strain JA-2-3B'a(2-13)) (Cyanobacteria bacterium Yellowstone B-Prime).